The sequence spans 183 residues: ATP synthase subunit delta (183 aa).

Belongs to the ATPase delta chain family. As to quaternary structure, F-type ATPases have 2 components, F(1) - the catalytic core - and F(0) - the membrane proton channel. F(1) has five subunits: alpha(3), beta(3), gamma(1), delta(1), epsilon(1). F(0) has three main subunits: a(1), b(2) and c(10-14). The alpha and beta chains form an alternating ring which encloses part of the gamma chain. F(1) is attached to F(0) by a central stalk formed by the gamma and epsilon chains, while a peripheral stalk is formed by the delta and b chains.

The protein resides in the cell inner membrane. In terms of biological role, f(1)F(0) ATP synthase produces ATP from ADP in the presence of a proton or sodium gradient. F-type ATPases consist of two structural domains, F(1) containing the extramembraneous catalytic core and F(0) containing the membrane proton channel, linked together by a central stalk and a peripheral stalk. During catalysis, ATP synthesis in the catalytic domain of F(1) is coupled via a rotary mechanism of the central stalk subunits to proton translocation. This protein is part of the stalk that links CF(0) to CF(1). It either transmits conformational changes from CF(0) to CF(1) or is implicated in proton conduction. The sequence is that of ATP synthase subunit delta from Oleidesulfovibrio alaskensis (strain ATCC BAA-1058 / DSM 17464 / G20) (Desulfovibrio alaskensis).